Reading from the N-terminus, the 198-residue chain is MKIIIATHNPHKTEEIKNFFKGYPVEIYSMADLGIKEDIEETGNTIEENALIKARFLKEKVDGIVIADDTGLFVEHLNGQPGVYSARFAGENATYEDNNKKLLKLLEGVPYEKRKAYFKTVIAVVEREKETLLEGKLEGHILDHPRGKNGFGYDPVFYVDNLEKSLAELTMEEKNKISHRADALMKLKNYILKRLEEK.

Residue 7-12 (THNPHK) participates in substrate binding. Mg(2+)-binding residues include Glu-40 and Asp-69. Asp-69 functions as the Proton acceptor in the catalytic mechanism. Substrate contacts are provided by residues Thr-70, 151-154 (FGYD), Lys-174, and 179-180 (HR).

Belongs to the HAM1 NTPase family. In terms of assembly, homodimer. Mg(2+) serves as cofactor.

It carries out the reaction XTP + H2O = XMP + diphosphate + H(+). The catalysed reaction is dITP + H2O = dIMP + diphosphate + H(+). The enzyme catalyses ITP + H2O = IMP + diphosphate + H(+). Pyrophosphatase that catalyzes the hydrolysis of nucleoside triphosphates to their monophosphate derivatives, with a high preference for the non-canonical purine nucleotides XTP (xanthosine triphosphate), dITP (deoxyinosine triphosphate) and ITP. Seems to function as a house-cleaning enzyme that removes non-canonical purine nucleotides from the nucleotide pool, thus preventing their incorporation into DNA/RNA and avoiding chromosomal lesions. The polypeptide is dITP/XTP pyrophosphatase (Thermoanaerobacter pseudethanolicus (strain ATCC 33223 / 39E) (Clostridium thermohydrosulfuricum)).